A 134-amino-acid chain; its full sequence is ATP synthase epsilon chain, chloroplastic (134 aa).

The protein belongs to the ATPase epsilon chain family. F-type ATPases have 2 components, CF(1) - the catalytic core - and CF(0) - the membrane proton channel. CF(1) has five subunits: alpha(3), beta(3), gamma(1), delta(1), epsilon(1). CF(0) has three main subunits: a, b and c.

It localises to the plastid. The protein resides in the chloroplast thylakoid membrane. Functionally, produces ATP from ADP in the presence of a proton gradient across the membrane. The polypeptide is ATP synthase epsilon chain, chloroplastic (Spinacia oleracea (Spinach)).